A 440-amino-acid chain; its full sequence is NADH-quinone oxidoreductase subunit D 1 (440 aa).

Belongs to the complex I 49 kDa subunit family. NDH-1 is composed of 14 different subunits. Subunits NuoB, C, D, E, F, and G constitute the peripheral sector of the complex.

The protein localises to the cell membrane. It carries out the reaction a quinone + NADH + 5 H(+)(in) = a quinol + NAD(+) + 4 H(+)(out). In terms of biological role, NDH-1 shuttles electrons from NADH, via FMN and iron-sulfur (Fe-S) centers, to quinones in the respiratory chain. The immediate electron acceptor for the enzyme in this species is believed to be a menaquinone. Couples the redox reaction to proton translocation (for every two electrons transferred, four hydrogen ions are translocated across the cytoplasmic membrane), and thus conserves the redox energy in a proton gradient. The chain is NADH-quinone oxidoreductase subunit D 1 from Streptomyces griseus subsp. griseus (strain JCM 4626 / CBS 651.72 / NBRC 13350 / KCC S-0626 / ISP 5235).